Consider the following 361-residue polypeptide: Core-capsid bridging protein (361 aa).

Residues Arg311–Ser321 are compositionally biased toward basic residues. Residues Arg311–Lys331 are disordered.

Belongs to the adenoviridae core-capsid bridging protein family. Monomer. Homodimer. Exists in equilibrium between monomers and dimers in solution. Interacts with the histone-like nucleoprotein; this interactions bridge the virus core to the capsid. Interacts with core protein X; this interactions bridge the virus core to the capsid. Interacts with the endosome lysis protein VI; this interactions bridge the virus core to the capsid. Interacts with the peripentonal hexons. Interacts with host NPM1; this interaction might play a role in virus assembly.

Its subcellular location is the virion. It localises to the host nucleus. The protein resides in the host nucleolus. Associates loosely with the viral DNA to form an outer shell around the nucleoprotein-DNA complex and links it with the capsid by binding the endosome lysis protein. Dissociates from the viral genome during entry. Might be involved in nuclear capsid assembly of the viral particles through its association with NPM1/nucleophosmin. The protein is Core-capsid bridging protein of Bovine adenovirus 2 (BAdV-2).